Consider the following 482-residue polypeptide: Auxin transporter-like protein 2 (482 aa).

Residues 1–58 (MVPAGDQAEEAIVADAGKEEAEVRAAMGVEQDGKFSMTSLLWHGGSVWDAWFSCASNQ) are Cytoplasmic-facing. Residues 59-76 (VAQVLLTLPYSFSQLGML) form a helical membrane-spanning segment. The Extracellular segment spans residues 77-78 (SG). A helical membrane pass occupies residues 79 to 99 (LLLQVFYGLMGSWTAYLISVL). At 100–134 (YVEYRARKEKEGVSFKNHVIQWFEVLDGLLGPYWK) the chain is on the cytoplasmic side. Residues 135–155 (AAGLAFNCTFLLFGSVIQLIA) form a helical membrane-spanning segment. Topologically, residues 156 to 171 (CASNIYYINDRLDKRT) are extracellular. Residues 172-192 (WTYIFGACCSTTVFIPSFHNY) traverse the membrane as a helical segment. R193 is a topological domain (cytoplasmic). Residues 194–214 (IWSFLGLGMTTYTAWYLAIAA) form a helical membrane-spanning segment. Topologically, residues 215-231 (AVHGQVDGVTHSGPSKM) are extracellular. A helical transmembrane segment spans residues 232–252 (VLYFTGATNILYTFGGHAVTV). Residues 253–265 (EIMHAMWKPQKFK) are Cytoplasmic-facing. A helical transmembrane segment spans residues 266 to 286 (YIYLVATLYVFTLTLPSASAM). Residues 287 to 313 (YWAFGDALLTHSNAFSLLPRSGWRDAA) lie on the Extracellular side of the membrane. Residues 314–334 (VILMLIHQFITFGFACTPLYF) form a helical membrane-spanning segment. Residues 335–355 (VWEKAIGMHGTRSVLTRALAR) lie on the Cytoplasmic side of the membrane. The helical transmembrane segment at 356–376 (LPIVVPIWFLAIIFPFFGPIN) threads the bilayer. S377 is a topological domain (extracellular). A helical transmembrane segment spans residues 378 to 398 (AVGALLVSFTVYIIPSLSHIL). Over 399-423 (TYRSASARLNAAEKPPPFLPSWSGM) the chain is Cytoplasmic. A helical membrane pass occupies residues 424–444 (FVVNVFVVAWVLVVGFGLGGW). Topologically, residues 445–482 (ASVTNFIKQIDTFGLFAKCYQCPPRAHAGAPLPAPPRH) are extracellular.

The protein belongs to the amino acid/polyamine transporter 2 family. Amino acid/auxin permease (AAAP) (TC 2.A.18.1) subfamily.

The protein localises to the cell membrane. Carrier protein involved in proton-driven auxin influx. May mediate the formation of auxin gradient from developing leaves (site of auxin biosynthesis) to tips. In Oryza sativa subsp. japonica (Rice), this protein is Auxin transporter-like protein 2.